The sequence spans 162 residues: 6,7-dimethyl-8-ribityllumazine synthase (162 aa).

Residues tyrosine 27, 58–60 (ALE), and 87–89 (CVI) each bind 5-amino-6-(D-ribitylamino)uracil. Residue 92–93 (ET) participates in (2S)-2-hydroxy-3-oxobutyl phosphate binding. The active-site Proton donor is the histidine 95. Asparagine 120 contributes to the 5-amino-6-(D-ribitylamino)uracil binding site. Arginine 134 is a binding site for (2S)-2-hydroxy-3-oxobutyl phosphate.

This sequence belongs to the DMRL synthase family.

It catalyses the reaction (2S)-2-hydroxy-3-oxobutyl phosphate + 5-amino-6-(D-ribitylamino)uracil = 6,7-dimethyl-8-(1-D-ribityl)lumazine + phosphate + 2 H2O + H(+). Its pathway is cofactor biosynthesis; riboflavin biosynthesis; riboflavin from 2-hydroxy-3-oxobutyl phosphate and 5-amino-6-(D-ribitylamino)uracil: step 1/2. Its function is as follows. Catalyzes the formation of 6,7-dimethyl-8-ribityllumazine by condensation of 5-amino-6-(D-ribitylamino)uracil with 3,4-dihydroxy-2-butanone 4-phosphate. This is the penultimate step in the biosynthesis of riboflavin. The polypeptide is 6,7-dimethyl-8-ribityllumazine synthase (Azorhizobium caulinodans (strain ATCC 43989 / DSM 5975 / JCM 20966 / LMG 6465 / NBRC 14845 / NCIMB 13405 / ORS 571)).